The sequence spans 625 residues: Vitamin B12 transporter BtuB (625 aa).

The N-terminal stretch at 1-21 (MTIKKYTLLTALSVTAFSGWA) is a signal peptide. Positions 31–38 (DEMVVTAN) match the TonB box motif. Positions 43–157 (PKSSVLAPVD…IGGVINILTG (115 aa)) constitute a TBDR plug domain. Residues S90, N97, and 115-116 (IT) contribute to the cyanocob(III)alamin site. Residues 160-625 (KPGTTLSAGL…EYYFTGSYNF (466 aa)) form the TBDR beta-barrel domain. Beta stranded transmembrane passes span 163 to 170 (TTLSAGLG), 174 to 183 (YQTYDGSTQQ), and 189 to 200 (TTVTLAGNYTYS). Residues D204, Q217, D219, and D221 each coordinate Ca(2+). Beta stranded transmembrane passes span 223-233 (FMGKMLWAGLE) and 238-254 (EQFN…NRSD). Residues Y255, D256, and D269 each coordinate Ca(2+). 14 beta stranded membrane-spanning segments follow: residues 271 to 285 (RKLS…LRYK), 287 to 304 (GIYA…KDYN), 317 to 333 (SLDE…NTFQ), 336 to 345 (NGMISAGADW), 363 to 379 (FTQH…QQIS), 381 to 391 (VTLEGAVRSDD), 395 to 410 (FGWH…WEFI), 413 to 427 (YRLI…KAPN), 445 to 454 (ESKQWEGGVE), 460 to 469 (LTWRLSAYRN), 484 to 501 (YFNI…TGSF), 505 to 520 (PLSH…PRNA), 528 to 540 (RRAK…QLDW), and 546 to 561 (DWSV…YDKD). Residue S317 coordinates cyanocob(III)alamin. R528 provides a ligand contact to cyanocob(III)alamin. Residue Y562 participates in cyanocob(III)alamin binding. 3 consecutive transmembrane segments (beta stranded) span residues 569–583 (TVEL…LAVS), 596–607 (IANLFDKDYEMV), and 613–625 (PGRE…SYNF). A TonB C-terminal box motif is present at residues 608–625 (YGYQTPGREYYFTGSYNF).

The protein belongs to the TonB-dependent receptor family. BtuB (TC 1.B.14.3.1) subfamily.

Its subcellular location is the cell outer membrane. In terms of biological role, involved in the active translocation of vitamin B12 (cyanocobalamin) across the outer membrane to the periplasmic space. It derives its energy for transport by interacting with the trans-periplasmic membrane protein TonB. The sequence is that of Vitamin B12 transporter BtuB from Yersinia pestis bv. Antiqua (strain Antiqua).